The primary structure comprises 3938 residues: Protein bassoon (3938 aa).

The segment at 1 to 158 (MGNEASLEGG…PTSPYSVPQI (158 aa)) is disordered. G2 is lipidated: N-myristoyl glycine. Positions 9–29 (GGAGEGPLPPGGSGLGPGPGA) are enriched in gly residues. Low complexity predominate over residues 31–61 (KPPSALAGGGQLPVAGAARAAGPPTPGLGLV). A 4 X 2 AA tandem repeats of P-G region spans residues 62 to 70 (PGPGPGPGP). Composition is skewed to polar residues over residues 86–98 (QRAT…QASA) and 127–154 (QVDS…SPYS). S142 carries the post-translational modification Phosphoserine. R145 bears the Omega-N-methylarginine mark. 2 consecutive C4-type zinc fingers follow at residues 167–190 (CPIC…CTQC) and 195–217 (CNQC…CLNC). Disordered regions lie at residues 228–346 (TTAP…LTGK) and 361–456 (LMSV…KTMP). Polar residues predominate over residues 230-240 (APRSKSQQQLH). Phosphoserine is present on residues S241 and S245. The span at 361 to 376 (LMSVQPEADTQGQPSP) shows a compositional bias: polar residues. Pro residues predominate over residues 394–406 (PRPPGSGPGPGPT). C4-type zinc fingers lie at residues 462–485 (CPLC…CTAC) and 490–512 (CTLC…CLNC). Disordered stretches follow at residues 523–921 (GEPA…LQGG), 934–1247 (GRLW…TPAG), 1294–1541 (MDPM…WQQS), and 1561–1611 (RMVH…RAPS). The span at 526-539 (APLPLPTPQEPPAG) shows a compositional bias: pro residues. The span at 548 to 589 (SPLKQKGPQGPGQPSGSLPPKASPQAAKASPQAAKASPQAKP) shows a compositional bias: low complexity. Repeat copies occupy residues 568 to 574 (KASPQAA), 575 to 581 (KASPQAA), and 582 to 588 (KASPQAK). The segment at 568–588 (KASPQAAKASPQAAKASPQAK) is 3 X 7 AA tandem repeats of K-A-S-P-Q-A-[AK]. Residues 616–629 (VPKPPPETAVPPGT) show a composition bias toward pro residues. Over residues 668–677 (QDLSRSPQSL) the composition is skewed to polar residues. Residues 678–692 (SDTGYSSDGVSSSQS) show a composition bias toward low complexity. Over residues 693–702 (EITGVVQQEV) the composition is skewed to polar residues. Composition is skewed to acidic residues over residues 769 to 784 (FDSD…EDDS) and 847 to 858 (SAEEDNLEEDDT). At R863 the chain carries Omega-N-methylarginine. Phosphoserine is present on S965. The span at 979-996 (PASTPSYTSGTSPTSLSS) shows a compositional bias: low complexity. The stretch at 1032 to 1087 (IEDSSEEEELREEEELLREQEKMREVEQQRIRSTARKTRRDKEELRAQRRRERSKT) forms a coiled coil. A compositionally biased stretch (acidic residues) spans 1034–1047 (DSSEEEELREEEEL). 2 positions are modified to phosphoserine: S1035 and S1036. The span at 1048 to 1061 (LREQEKMREVEQQR) shows a compositional bias: basic and acidic residues. Residue S1085 is modified to Phosphoserine. The residue at position 1087 (T1087) is a Phosphothreonine. Phosphoserine occurs at positions 1093 and 1099. Residues 1102 to 1117 (EELRQAAEMEELHRSS) are compositionally biased toward basic and acidic residues. Composition is skewed to low complexity over residues 1118–1128 (CSEYSPSPSLD) and 1158–1175 (SPTE…SGRP). The stretch at 1176 to 1203 (LKSAEEAYEDMMRKAELLQRQQGQAAGA) forms a coiled coil. The segment covering 1177-1192 (KSAEEAYEDMMRKAEL) has biased composition (basic and acidic residues). The segment covering 1194 to 1204 (QRQQGQAAGAR) has biased composition (low complexity). A compositionally biased stretch (polar residues) spans 1211-1224 (SQPTGPRSQGSFEY). Residue S1221 is modified to Phosphoserine. Positions 1318 to 1328 (SFPTSTSSDSS) are enriched in low complexity. A glycan (O-linked (GlcNAc) threonine) is linked at T1339. Positions 1342–1351 (FAKEPQEPLK) are enriched in basic and acidic residues. Composition is skewed to low complexity over residues 1352–1364 (LHSS…LASK) and 1374–1386 (PGTP…APCP). A glycan (O-linked (GlcNAc) threonine) is linked at T1380. Over residues 1402 to 1426 (SPSTSSTIHSYGQPPTTANYGSQTE) the composition is skewed to polar residues. Phosphoserine occurs at positions 1470, 1479, and 1481. Over residues 1476–1487 (STPSESPTFSPS) the composition is skewed to low complexity. Composition is skewed to polar residues over residues 1496–1510 (EFST…SSDI) and 1561–1597 (RMVH…SQMP). Residues R1780 and R1784 each carry the omega-N-methylarginine modification. At R1794 the chain carries Asymmetric dimethylarginine; alternate. R1794 bears the Omega-N-methylarginine; alternate mark. R1806 bears the Omega-N-methylarginine mark. Residues 1914–1964 (PSAPDKSVTDAALPGQSSGPFYSPRDPEPPEPLTFRAQGVVGPGPHEEQRP) form a disordered region. A glycan (O-linked (GlcNAc) threonine) is linked at T1922. Phosphoserine is present on residues S1978 and S2034. Omega-N-methylarginine occurs at positions 2039 and 2069. Asymmetric dimethylarginine is present on residues R2243, R2253, and R2259. Positions 2280–2305 (AAKASGAGGPPRPELPAGGAREEPLS) are disordered. An O-linked (GlcNAc) threonine glycan is attached at T2307. Disordered stretches follow at residues 2318–2343 (VAQA…SGVL) and 2461–2486 (EEQK…PPAA). The stretch at 2345-2470 (RPVMEKEEAS…EEQKQRQKAP (126 aa)) forms a coiled coil. The O-linked (GlcNAc) threonine glycan is linked to T2510. The segment at 2513–2648 (PGQAREPVLH…HEASASSSAA (136 aa)) is disordered. Positions 2527-2537 (SSASDMSLQTE) are enriched in polar residues. At S2564 the chain carries Phosphoserine. A phosphothreonine mark is found at T2581 and T2608. Residues 2629–2641 (RHSDSGSDSKHEA) show a composition bias toward basic and acidic residues. A glycan (O-linked (GlcNAc) threonine) is linked at T2685. Residues 2715 to 3263 (EPDGQAQGVA…GGVSGRPGKD (549 aa)) are interaction with DAO. Residues S2796, S2845, and S2851 each carry the phosphoserine modification. The segment at 2839–2859 (TLQRSLSDPKPLSPTAEESAK) is disordered. O-linked (GlcNAc) threonine glycosylation occurs at T2930. Residues 2933–2975 (SLLRELDRDLRLVEHESTKLRKKQAELDEEEKEIDAKLKYLEL) adopt a coiled-coil conformation. The sufficient for binding to ERC2 stretch occupies residues 2934 to 2996 (LLRELDRDLR…DRVGRDYPPL (63 aa)). S3007 is subject to Phosphoserine. A compositionally biased stretch (polar residues) spans 3055–3068 (TQYTAGSSGPTQNG). Disordered regions lie at residues 3055–3148 (TQYT…ADLE), 3162–3399 (AVTV…SRKF), 3414–3546 (QQRY…PRAH), and 3569–3910 (YHLG…VFSK). Positions 3184–3196 (EHGKAPEHPRGGD) are enriched in basic and acidic residues. Positions 3198–3222 (SSVSQSPAPTYPSDSHYTSLEQNVP) are enriched in polar residues. The residue at position 3286 (S3286) is a Phosphoserine. Residues 3304–3315 (ESNGRPASTHYY) show a composition bias toward polar residues. Composition is skewed to basic and acidic residues over residues 3316–3328 (SDSD…RADK), 3358–3377 (QGME…KDVE), and 3450–3469 (LSSH…RETA). S3368 is subject to Phosphoserine. An Omega-N-methylarginine modification is found at R3488. Residues 3506 to 3520 (PLGRPRPAGGALPPG) are compositionally biased toward low complexity. 2 stretches are compositionally biased toward basic and acidic residues: residues 3535-3546 (VQEHVKDGPRAH) and 3578-3588 (WFDKPRDARSD). A compositionally biased stretch (basic residues) spans 3638–3651 (EHRHHGDHGRHSGR). Residues 3652–3676 (HAGEEPGRRAARPHARDMGRHETRP) are compositionally biased toward basic and acidic residues. The segment covering 3751 to 3820 (PQQSQPPSSR…ARLQQQSQPT (70 aa)) has biased composition (low complexity). Residues 3772–3803 (QTQQQQQQQQQQQQQQQQQQQQQQQQGLGQQA) adopt a coiled-coil conformation. Position 3822 is an omega-N-methylarginine (R3822). Over residues 3834 to 3848 (KPQPGPTTAPGPQPA) the composition is skewed to pro residues. Composition is skewed to low complexity over residues 3860–3887 (KPAA…KTGA) and 3894–3904 (GAPAGQPAAEG).

Interacts with PCLO, ERC2/CAST1, RIMS1 and UNC13A. Interacts with TPRG1L. Interacts with DYNLL1 and DYNLL2; these interactions potentially link PTVs to dynein and myosin V motor complexes. Interacts with ATG5; this interaction is important for the regulation of presynaptic autophagy. Interacts (via C-terminus) with TRIO (via N-terminus). Interacts with CTBP1. Interacts with SIAH1; this interaction negatively regulates SIAH1 E3 ligase activity. Interacts (via coiled region) with DAO; the interaction is direct. Myristoylated. The N-terminal myristoylation is not sufficient for presynaptic localization. As to expression, detected at synapses in the stratum lucidum in the hippocampus CA3 region (at protein level).

It is found in the cytoplasm. The protein localises to the presynaptic active zone. Its subcellular location is the cytoskeleton. The protein resides in the cytoplasmic vesicle. It localises to the secretory vesicle. It is found in the synaptic vesicle membrane. Its function is as follows. Scaffold protein of the presynaptic cytomatrix at the active zone (CAZ) which is the place in the synapse where neurotransmitter is released. After synthesis, participates in the formation of Golgi-derived membranous organelles termed Piccolo-Bassoon transport vesicles (PTVs) that are transported along axons to sites of nascent synaptic contacts. At the presynaptic active zone, regulates the spatial organization of synaptic vesicle cluster, the protein complexes that execute membrane fusion and compensatory endocytosis. Also functions in processes other than assembly such as the regulation of specific presynaptic protein ubiquitination by interacting with SIAH1 or the regulation of presynaptic autophagy by associating with ATG5. Also mediates synapse to nucleus communication leading to reconfiguration of gene expression by associating with the transcriptional corepressor CTBP1 and by subsequently reducing the size of its pool available for nuclear import. Inhibits the activity of the proportion of DAO enzyme that localizes to the presynaptic active zone, which may modulate synaptic transmission. The chain is Protein bassoon from Rattus norvegicus (Rat).